Here is a 375-residue protein sequence, read N- to C-terminus: Acyl-coenzyme A diphosphatase NUDT19 (375 aa).

The 249-residue stretch at 15–263 (AASIVLAAGW…IWLPPPQFYE (249 aa)) folds into the Nudix hydrolase domain. A disordered region spans residues 91–116 (LGPAPFSRTAFPSLPDTDDHKTDNTG). The Nudix box signature appears at 116–137 (GTLPEDVAFRICAVREAFEEAG). Mg(2+) contacts are provided by Glu-131 and Glu-135. Positions 373–375 (SHL) match the Microbody targeting signal motif.

Belongs to the Nudix hydrolase family. In terms of assembly, monomer. The cofactor is Mg(2+). Mn(2+) is required as a cofactor.

It localises to the peroxisome. The catalysed reaction is an acyl-CoA + H2O = an acyl-4'-phosphopantetheine + adenosine 3',5'-bisphosphate + 2 H(+). It carries out the reaction CoA + H2O = (R)-4'-phosphopantetheine + adenosine 3',5'-bisphosphate + 2 H(+). The enzyme catalyses hexanoyl-CoA + H2O = hexanoyl-4'-phosphopantetheine + adenosine 3',5'-bisphosphate + 2 H(+). It catalyses the reaction octanoyl-CoA + H2O = S-octanoyl-4'-phosphopantetheine + adenosine 3',5'-bisphosphate + 2 H(+). The catalysed reaction is butanoyl-CoA + H2O = S-butanoyl-4'-phosphopantetheine + adenosine 3',5'-bisphosphate + 2 H(+). It carries out the reaction propanoyl-CoA + H2O = propanoyl-4'-phosphopantetheine + adenosine 3',5'-bisphosphate + 2 H(+). The enzyme catalyses malonyl-CoA + H2O = malonyl-4'-phosphopantetheine + adenosine 3',5'-bisphosphate + 2 H(+). It catalyses the reaction succinyl-CoA + H2O = succinyl-4'-phosphopantetheine + adenosine 3',5'-bisphosphate + 2 H(+). The catalysed reaction is choloyl-CoA + H2O = S-choloyl-4'-phosphopantetheine + adenosine 3',5'-bisphosphate + 2 H(+). It carries out the reaction 4,8-dimethylnonanoyl-CoA + H2O = S-(4,8-dimethylnonanoyl)-4'-phosphopantetheine + adenosine 3',5'-bisphosphate + 2 H(+). The enzyme catalyses (9Z,12Z,15Z)-octadecatrienoyl-CoA + H2O = S-(9Z,12Z,15Z-octadecatrienoyl)-4'-phosphopantetheine + adenosine 3',5'-bisphosphate + 2 H(+). It catalyses the reaction (9Z,12Z)-octadecadienoyl-CoA + H2O = S-(9Z,12Z-octadecadienoyl)-4'-phosphopantetheine + adenosine 3',5'-bisphosphate + 2 H(+). The catalysed reaction is (9Z)-hexadecenoyl-CoA + H2O = S-(9Z-hexadecenoyl)-4'-phosphopantetheine + adenosine 3',5'-bisphosphate + 2 H(+). It carries out the reaction (9Z)-tetradecenoyl-CoA + H2O = S-(9Z-tetradecenoyl)-4'-phosphopantetheine + adenosine 3',5'-bisphosphate + 2 H(+). The enzyme catalyses (6Z)-octenoyl-CoA + H2O = S-(6Z-octenoyl)-4'-phosphopantetheine + adenosine 3',5'-bisphosphate + 2 H(+). It catalyses the reaction hexadecanoyl-CoA + H2O = S-hexadecanoyl-4'-phosphopantetheine + adenosine 3',5'-bisphosphate + 2 H(+). The catalysed reaction is tetradecanoyl-CoA + H2O = tetradecanoyl-4'-phosphopantetheine + adenosine 3',5'-bisphosphate + 2 H(+). It carries out the reaction dodecanoyl-CoA + H2O = S-dodecanoyl-4'-phosphopantetheine + adenosine 3',5'-bisphosphate + 2 H(+). The enzyme catalyses a 5'-end CoA-ribonucleoside in mRNA + H2O = a 5'-end phospho-adenosine-phospho-ribonucleoside in mRNA + (R)-4'-phosphopantetheine + 2 H(+). Fatty acyl-coenzyme A (CoA) diphosphatase that hydrolyzes fatty acyl-CoA to yield acyl-4'-phosphopantetheine and adenosine 3',5'-bisphosphate. Mediates the hydrolysis of a wide range of CoA esters, including choloyl-CoA and branched-chain fatty-acyl-CoA esters and at low substrate concentrations medium and long-chain fatty-acyl-CoA esters are the primary substrates. Highest activity seen with medium-chain acyl-CoA esters and higher rates of activity seen with the unsaturated acyl-CoA esters compared with the saturated esters. Exhibits decapping activity towards dpCoA-capped RNAs in vitro. The polypeptide is Acyl-coenzyme A diphosphatase NUDT19 (NUDT19) (Homo sapiens (Human)).